We begin with the raw amino-acid sequence, 354 residues long: Guanine nucleotide-binding protein G(o) subunit alpha (354 aa).

Gly2 carries the N-myristoyl glycine lipid modification. The S-palmitoyl cysteine moiety is linked to residue Cys3. One can recognise a G-alpha domain in the interval 32–354; that stretch reads KDIKLLLLGA…ANNLRGCGLY (323 aa). The segment at 35–48 is G1 motif; the sequence is KLLLLGAGESGKST. Residues 40-47, 176-182, 201-205, 270-273, and Ala326 each bind GTP; these read GAGESGKS, LRTRVKT, DVGGQ, and NKKD. 2 residues coordinate Mg(2+): Ser47 and Thr182. The tract at residues 174–182 is G2 motif; that stretch reads DILRTRVKT. The interval 197–206 is G3 motif; that stretch reads FKLFDVGGQR. Residues 266–273 form a G4 motif region; sequence ILFLNKKD. A G5 motif region spans residues 324–329; the sequence is TCATDT.

Belongs to the G-alpha family. G(i/o/t/z) subfamily. In terms of assembly, g proteins are composed of 3 units; alpha, beta and gamma. The alpha chain contains the guanine nucleotide binding site.

Guanine nucleotide-binding proteins (G proteins) are involved as modulators or transducers in various transmembrane signaling systems. The G(o) protein function is not clear. This chain is Guanine nucleotide-binding protein G(o) subunit alpha, found in Planorbella trivolvis (Marsh rams-horn).